The chain runs to 256 residues: tRNA-cytidine(32) 2-sulfurtransferase (256 aa).

Residues 35 to 40 (SGGKDS) carry the PP-loop motif motif. [4Fe-4S] cluster contacts are provided by cysteine 110, cysteine 113, and cysteine 201.

It belongs to the TtcA family. As to quaternary structure, homodimer. The cofactor is Mg(2+). [4Fe-4S] cluster serves as cofactor.

It is found in the cytoplasm. It catalyses the reaction cytidine(32) in tRNA + S-sulfanyl-L-cysteinyl-[cysteine desulfurase] + AH2 + ATP = 2-thiocytidine(32) in tRNA + L-cysteinyl-[cysteine desulfurase] + A + AMP + diphosphate + H(+). It functions in the pathway tRNA modification. Catalyzes the ATP-dependent 2-thiolation of cytidine in position 32 of tRNA, to form 2-thiocytidine (s(2)C32). The sulfur atoms are provided by the cysteine/cysteine desulfurase (IscS) system. The protein is tRNA-cytidine(32) 2-sulfurtransferase of Coxiella burnetii (strain RSA 493 / Nine Mile phase I).